A 186-amino-acid chain; its full sequence is Ribosome-recycling factor (186 aa).

This sequence belongs to the RRF family.

Its subcellular location is the cytoplasm. Functionally, responsible for the release of ribosomes from messenger RNA at the termination of protein biosynthesis. May increase the efficiency of translation by recycling ribosomes from one round of translation to another. The chain is Ribosome-recycling factor from Bacteroides thetaiotaomicron (strain ATCC 29148 / DSM 2079 / JCM 5827 / CCUG 10774 / NCTC 10582 / VPI-5482 / E50).